The primary structure comprises 132 residues: Ribosome-binding factor A (132 aa).

This sequence belongs to the RbfA family. Monomer. Binds 30S ribosomal subunits, but not 50S ribosomal subunits or 70S ribosomes.

The protein localises to the cytoplasm. In terms of biological role, one of several proteins that assist in the late maturation steps of the functional core of the 30S ribosomal subunit. Associates with free 30S ribosomal subunits (but not with 30S subunits that are part of 70S ribosomes or polysomes). Required for efficient processing of 16S rRNA. May interact with the 5'-terminal helix region of 16S rRNA. The polypeptide is Ribosome-binding factor A (Pectobacterium carotovorum subsp. carotovorum (strain PC1)).